The primary structure comprises 150 residues: Large ribosomal subunit protein bL17 (150 aa).

The segment at 126-150 (DRAKRREERLKAQREGRDHEEETDE) is disordered.

Belongs to the bacterial ribosomal protein bL17 family. Part of the 50S ribosomal subunit. Contacts protein L32.

This Solibacter usitatus (strain Ellin6076) protein is Large ribosomal subunit protein bL17.